A 350-amino-acid chain; its full sequence is Lipoyl synthase (350 aa).

The disordered stretch occupies residues 1 to 39; it reads MSDTSSPKPVASGEKFRTAQGITAIKDGQKRRASAEPQV. Residues C73, C78, C84, C99, C103, C106, and S314 each contribute to the [4Fe-4S] cluster site. Residues 85 to 303 enclose the Radical SAM core domain; the sequence is WSNGTATIML…RDIGLEKGFM (219 aa).

Belongs to the radical SAM superfamily. Lipoyl synthase family. [4Fe-4S] cluster is required as a cofactor.

Its subcellular location is the cytoplasm. The catalysed reaction is [[Fe-S] cluster scaffold protein carrying a second [4Fe-4S](2+) cluster] + N(6)-octanoyl-L-lysyl-[protein] + 2 oxidized [2Fe-2S]-[ferredoxin] + 2 S-adenosyl-L-methionine + 4 H(+) = [[Fe-S] cluster scaffold protein] + N(6)-[(R)-dihydrolipoyl]-L-lysyl-[protein] + 4 Fe(3+) + 2 hydrogen sulfide + 2 5'-deoxyadenosine + 2 L-methionine + 2 reduced [2Fe-2S]-[ferredoxin]. Its pathway is protein modification; protein lipoylation via endogenous pathway; protein N(6)-(lipoyl)lysine from octanoyl-[acyl-carrier-protein]: step 2/2. Functionally, catalyzes the radical-mediated insertion of two sulfur atoms into the C-6 and C-8 positions of the octanoyl moiety bound to the lipoyl domains of lipoate-dependent enzymes, thereby converting the octanoylated domains into lipoylated derivatives. The sequence is that of Lipoyl synthase from Ectopseudomonas mendocina (strain ymp) (Pseudomonas mendocina).